Consider the following 211-residue polypeptide: Ribonuclease T (211 aa).

The Exonuclease domain maps to 24–198 (VVVDVETGGF…YDAEKTAHLF (175 aa)). Mg(2+)-binding residues include Asp-27, Glu-29, His-185, and Asp-190. His-185 (proton donor/acceptor) is an active-site residue.

It belongs to the RNase T family. Homodimer. Requires Mg(2+) as cofactor.

Functionally, trims short 3' overhangs of a variety of RNA species, leaving a one or two nucleotide 3' overhang. Responsible for the end-turnover of tRNA: specifically removes the terminal AMP residue from uncharged tRNA (tRNA-C-C-A). Also appears to be involved in tRNA biosynthesis. The sequence is that of Ribonuclease T from Xylella fastidiosa (strain Temecula1 / ATCC 700964).